Reading from the N-terminus, the 207-residue chain is MTSVALFKQDGSQNGTVELNDSVFSVEANESAEFDAILRQRASLRQGTHAVKNRSAVRGGGKKPWRQKGTGRARQGSIRAPQFRGGGIVFGPTPRSYNYALPRKVRQLAIKSALSQKVANDKFVVVDGLNFDAPKTKEFAGVMNNLKVSERVLVVVTDEDKNAQLSARNLPKTTVVTPAGVNILNVVDAQKIIITQSALSQVEEVLA.

Positions K52–Q75 are disordered. The segment covering G60 to G71 has biased composition (basic residues).

The protein belongs to the universal ribosomal protein uL4 family. As to quaternary structure, part of the 50S ribosomal subunit.

Its function is as follows. One of the primary rRNA binding proteins, this protein initially binds near the 5'-end of the 23S rRNA. It is important during the early stages of 50S assembly. It makes multiple contacts with different domains of the 23S rRNA in the assembled 50S subunit and ribosome. Functionally, forms part of the polypeptide exit tunnel. The protein is Large ribosomal subunit protein uL4 of Limosilactobacillus fermentum (strain NBRC 3956 / LMG 18251) (Lactobacillus fermentum).